Here is a 169-residue protein sequence, read N- to C-terminus: U3 small nucleolar ribonucleoprotein protein imp3 (169 aa).

Residues 109–166 (RRLPVVMCRLKMCETVSTSVKYVEHGHVRVGPEVITDPAFFVTRNMEDFVTWVDSSKI) form the S4 RNA-binding domain.

The protein belongs to the universal ribosomal protein uS4 family. As to quaternary structure, component of a heterotrimeric complex containing imp3, imp4 and mpp10.

The protein resides in the nucleus. It localises to the nucleolus. Functionally, component of the U3 small nucleolar ribonucleoprotein. Required for the early cleavages at sites A0, A1 and A2 during 18S ribosomal pre-RNA processing. The protein is U3 small nucleolar ribonucleoprotein protein imp3 (RBP) of Pneumocystis carinii.